A 468-amino-acid polypeptide reads, in one-letter code: ATP synthase subunit beta (468 aa).

155–162 is an ATP binding site; it reads GGAGVGKT.

The protein belongs to the ATPase alpha/beta chains family. F-type ATPases have 2 components, CF(1) - the catalytic core - and CF(0) - the membrane proton channel. CF(1) has five subunits: alpha(3), beta(3), gamma(1), delta(1), epsilon(1). CF(0) has three main subunits: a(1), b(2) and c(9-12). The alpha and beta chains form an alternating ring which encloses part of the gamma chain. CF(1) is attached to CF(0) by a central stalk formed by the gamma and epsilon chains, while a peripheral stalk is formed by the delta and b chains.

It is found in the cell membrane. The enzyme catalyses ATP + H2O + 4 H(+)(in) = ADP + phosphate + 5 H(+)(out). Produces ATP from ADP in the presence of a proton gradient across the membrane. The catalytic sites are hosted primarily by the beta subunits. This Streptococcus agalactiae serotype Ia (strain ATCC 27591 / A909 / CDC SS700) protein is ATP synthase subunit beta.